The chain runs to 403 residues: L-lactate oxidase (403 aa).

Residues 21 to 375 (EGSVDFVNVF…KHFKLRHNPY (355 aa)) form the FMN hydroxy acid dehydrogenase domain. Y47 contacts pyruvate. FMN-binding positions include 99–101 (PVA), S128, and Q150. A pyruvate-binding site is contributed by Y152. Position 178 (T178) interacts with FMN. R187 and Y220 together coordinate pyruvate. K246 is a binding site for FMN. H270 and R273 together coordinate pyruvate. The Proton acceptor role is filled by H270. FMN is bound by residues 301–305 (DSGVR) and R325.

This sequence belongs to the FMN-dependent alpha-hydroxy acid dehydrogenase family. As to quaternary structure, homotetramer. The cofactor is FMN.

The enzyme catalyses (S)-lactate + O2 = pyruvate + H2O2. Catalyzes the oxidation of (S)-lactate (L-lactate) to pyruvate, with a reduction of O2 to H2O2. Is likely involved in the L-lactate aerobic metabolism of S.iniae that enables the bacterium to utilize L-lactate as an energy source for growth under aerobic conditions in the absence (or at low concentrations) of glucose. The chain is L-lactate oxidase from Streptococcus iniae (Streptococcus shiloi).